The chain runs to 327 residues: Ketol-acid reductoisomerase (NADP(+)) (327 aa).

The KARI N-terminal Rossmann domain maps to 2-182 (AKIYTDKDAS…GATRAGVIET (181 aa)). Residues 25-28 (YGIQ), Arg48, Ser53, and 83-86 (DMEQ) contribute to the NADP(+) site. The active site involves His108. Gly134 lines the NADP(+) pocket. The region spanning 183–327 (TFAEETETDL…GAEMRKLLFG (145 aa)) is the KARI C-terminal knotted domain. Mg(2+) is bound by residues Asp191, Glu195, Glu227, and Glu231. Position 252 (Ser252) interacts with substrate.

It belongs to the ketol-acid reductoisomerase family. The cofactor is Mg(2+).

The catalysed reaction is (2R)-2,3-dihydroxy-3-methylbutanoate + NADP(+) = (2S)-2-acetolactate + NADPH + H(+). The enzyme catalyses (2R,3R)-2,3-dihydroxy-3-methylpentanoate + NADP(+) = (S)-2-ethyl-2-hydroxy-3-oxobutanoate + NADPH + H(+). The protein operates within amino-acid biosynthesis; L-isoleucine biosynthesis; L-isoleucine from 2-oxobutanoate: step 2/4. It participates in amino-acid biosynthesis; L-valine biosynthesis; L-valine from pyruvate: step 2/4. Involved in the biosynthesis of branched-chain amino acids (BCAA). Catalyzes an alkyl-migration followed by a ketol-acid reduction of (S)-2-acetolactate (S2AL) to yield (R)-2,3-dihydroxy-isovalerate. In the isomerase reaction, S2AL is rearranged via a Mg-dependent methyl migration to produce 3-hydroxy-3-methyl-2-ketobutyrate (HMKB). In the reductase reaction, this 2-ketoacid undergoes a metal-dependent reduction by NADPH to yield (R)-2,3-dihydroxy-isovalerate. The protein is Ketol-acid reductoisomerase (NADP(+)) of Pyrobaculum neutrophilum (strain DSM 2338 / JCM 9278 / NBRC 100436 / V24Sta) (Thermoproteus neutrophilus).